The following is a 341-amino-acid chain: Glyceraldehyde-3-phosphate dehydrogenase 2 (341 aa).

Residues Arg12–Ile13, Arg78, and Thr120 each bind NAD(+). Residues Ser152 to Thr154 and Thr183 contribute to the D-glyceraldehyde 3-phosphate site. The active-site Nucleophile is Cys153. Asn184 provides a ligand contact to NAD(+). D-glyceraldehyde 3-phosphate-binding positions include Arg198, Thr211–Gly212, and Arg234. Asn313 is an NAD(+) binding site.

Belongs to the glyceraldehyde-3-phosphate dehydrogenase family. As to quaternary structure, homotetramer.

It is found in the cytoplasm. It carries out the reaction D-glyceraldehyde 3-phosphate + phosphate + NAD(+) = (2R)-3-phospho-glyceroyl phosphate + NADH + H(+). Its pathway is carbohydrate degradation; glycolysis; pyruvate from D-glyceraldehyde 3-phosphate: step 1/5. Its function is as follows. Catalyzes the oxidative phosphorylation of glyceraldehyde 3-phosphate (G3P) to 1,3-bisphosphoglycerate (BPG) using the cofactor NAD. The first reaction step involves the formation of a hemiacetal intermediate between G3P and a cysteine residue, and this hemiacetal intermediate is then oxidized to a thioester, with concomitant reduction of NAD to NADH. The reduced NADH is then exchanged with the second NAD, and the thioester is attacked by a nucleophilic inorganic phosphate to produce BPG. The sequence is that of Glyceraldehyde-3-phosphate dehydrogenase 2 (gapA2) from Staphylococcus epidermidis (strain ATCC 35984 / DSM 28319 / BCRC 17069 / CCUG 31568 / BM 3577 / RP62A).